The primary structure comprises 348 residues: MRVLTIFLLFMTSIFAVQIKDVANTVGVRDNQLIGYGLVVGLNGSGDGTSSKFTLQSISNLLQGMNIKVDPNDIKSKNTAAVMVTAKLPAFAKSGDKLDITVSSMGDAKSLQGGTLLLTALRGIDGEIYAIAQGSISTGGLTPRPGGAGSHSTAATVMGGANVEREIPQNFSQNNDLTLSLKVADFKTANDIERVLNTVFGEEVAKAIDSRTVKLKKPEDLSNVDFMARVLEQDIAYKPQSKVIIDERTGTVIAGVDVEVEPVLITHKDITIKIDPNNNAVANQNEIDMKDGGFVDSSSNTLRINNAKSTVANIARMLNKLGATPNDIIAIMENLKRAGAINADLEII.

Residues 1-16 (MRVLTIFLLFMTSIFA) form the signal peptide.

This sequence belongs to the FlgI family. In terms of assembly, the basal body constitutes a major portion of the flagellar organelle and consists of four rings (L,P,S, and M) mounted on a central rod.

Its subcellular location is the periplasm. The protein resides in the bacterial flagellum basal body. In terms of biological role, assembles around the rod to form the L-ring and probably protects the motor/basal body from shearing forces during rotation. This Campylobacter jejuni subsp. doylei (strain ATCC BAA-1458 / RM4099 / 269.97) protein is Flagellar P-ring protein.